The sequence spans 450 residues: Molybdate-anion transporter (450 aa).

The next 12 membrane-spanning stretches (helical) occupy residues 1–21, 38–58, 79–99, 128–148, 167–187, 191–211, 249–269, 278–298, 311–331, 344–364, 376–396, and 409–429; these read MLVT…GLEL, FLQF…ADWL, ILYV…SSLV, FVLL…FSAF, IPAT…AAGV, AVAS…IPLL, VLLL…FVFL, GAPL…GSSL, PMHL…MLTF, FIAF…MSFL, GVLN…LLVL, and FSIC…LFTV.

The protein belongs to the major facilitator superfamily.

It localises to the cell membrane. Mediates high-affinity intracellular uptake of the rare oligo-element molybdenum. In Mus musculus (Mouse), this protein is Molybdate-anion transporter (Mfsd5).